The sequence spans 152 residues: Small ribosomal subunit protein uS15 (152 aa).

Residues Met-1–Lys-11 show a composition bias toward basic residues. A disordered region spans residues Met-1–Pro-23.

Belongs to the universal ribosomal protein uS15 family. As to quaternary structure, part of the 30S ribosomal subunit.

This is Small ribosomal subunit protein uS15 from Methanosarcina acetivorans (strain ATCC 35395 / DSM 2834 / JCM 12185 / C2A).